Consider the following 591-residue polypeptide: MADKKNLRTPIVCVMGHVDHGKTTLLDKIRGTAIVSGEAGAITQHIGATEVPIDVIINKLGDPRLRDRFIVPGLLFIDTPGHHAFTTLRSRGGALADLAIVVVDINEGFKPQTYESLQILKRFKTPFVVVANKIDRIGGWVSQKDLPFAVTFKKQSEDVQARLETKLYEVIGELYNQGFAAERYDRVTNFQKTLGVVPVSAMTGEGIPDVLMVLLGLAQKFLEANLHYSAKGPGVGTVLEVKEEKGLGATLDVILYDGTLKKGDTVVIGSLGKPIQTKVRALLKPRELSEMRYESKFKQVNKVTAAVGVKISAPGLEGALAGSPIRVANEDTLDEIVDQIKSEIDEVRIDTGAVGIMIKADTLGSLEALVHEFQKDEVSIRKAEVGDISHRDAIEASTVEDPLYSVIIGFNVKVHPDARDFLQESTVKVFTSDVIYRLVEDYQKYVKEQQEQAEKRIFETIIRPGKFKILPGCIFRQSKPAVVGIRVLGGVVRTNADVMLENGNVVGKIKGLQIEGENIPSAGVGKEVAMAIEGATVGRQIKEEDVLYVNVPERHAKVLEHEIYDSLSTDEKETLDIFLSLKRKDNPFWAK.

Residues 7-223 (LRTPIVCVMG…LLGLAQKFLE (217 aa)) form the tr-type G domain. Residues 16-23 (GHVDHGKT) are G1. 16–23 (GHVDHGKT) provides a ligand contact to GTP. Residues 41-45 (AITQH) form a G2 region. The segment at 78–81 (DTPG) is G3. GTP-binding positions include 78-82 (DTPGH) and 132-135 (NKID). Residues 132–135 (NKID) form a G4 region. The G5 stretch occupies residues 200–202 (SAM).

The protein belongs to the TRAFAC class translation factor GTPase superfamily. Classic translation factor GTPase family. IF-2 subfamily.

Functionally, function in general translation initiation by promoting the binding of the formylmethionine-tRNA to ribosomes. Seems to function along with eIF-2. The polypeptide is Probable translation initiation factor IF-2 (Methanosarcina barkeri (strain Fusaro / DSM 804)).